Consider the following 416-residue polypeptide: Serine hydroxymethyltransferase (416 aa).

(6S)-5,6,7,8-tetrahydrofolate-binding positions include leucine 118 and 122–124; that span reads GHL. At lysine 226 the chain carries N6-(pyridoxal phosphate)lysine. Residues glutamate 242 and 350–352 each bind (6S)-5,6,7,8-tetrahydrofolate; that span reads SPF.

Belongs to the SHMT family. Homodimer. It depends on pyridoxal 5'-phosphate as a cofactor.

It localises to the cytoplasm. It catalyses the reaction (6R)-5,10-methylene-5,6,7,8-tetrahydrofolate + glycine + H2O = (6S)-5,6,7,8-tetrahydrofolate + L-serine. The protein operates within one-carbon metabolism; tetrahydrofolate interconversion. Its pathway is amino-acid biosynthesis; glycine biosynthesis; glycine from L-serine: step 1/1. Functionally, catalyzes the reversible interconversion of serine and glycine with tetrahydrofolate (THF) serving as the one-carbon carrier. This reaction serves as the major source of one-carbon groups required for the biosynthesis of purines, thymidylate, methionine, and other important biomolecules. Also exhibits THF-independent aldolase activity toward beta-hydroxyamino acids, producing glycine and aldehydes, via a retro-aldol mechanism. This Helicobacter pylori (strain Shi470) protein is Serine hydroxymethyltransferase.